Reading from the N-terminus, the 149-residue chain is Transcriptional repressor NrdR (149 aa).

The segment at 3–34 (CPFCSATDTKVIDSRLVAEGHQVRRRRECTEC) is a zinc-finger region. Residues 49–139 (PRVIKRDGSR…VYRAFEDVSE (91 aa)) enclose the ATP-cone domain.

This sequence belongs to the NrdR family. It depends on Zn(2+) as a cofactor.

Functionally, negatively regulates transcription of bacterial ribonucleotide reductase nrd genes and operons by binding to NrdR-boxes. This is Transcriptional repressor NrdR from Shewanella baltica (strain OS223).